We begin with the raw amino-acid sequence, 393 residues long: S-adenosylmethionine synthase 2 (393 aa).

E9 is a binding site for Mg(2+). H15 serves as a coordination point for ATP. Residue E43 participates in K(+) binding. L-methionine-binding residues include E56 and Q99. Residues 167-169, 235-238, D246, 252-253, A269, K273, and K277 contribute to the ATP site; these read DGK, SGRF, and RK. L-methionine is bound at residue D246. Position 277 (K277) interacts with L-methionine.

It belongs to the AdoMet synthase family. In terms of assembly, homotetramer. It depends on Mn(2+) as a cofactor. The cofactor is Mg(2+). Requires Co(2+) as cofactor. K(+) serves as cofactor. In terms of tissue distribution, mostly expressed in roots. Also present in stems and leaves.

The protein resides in the cytoplasm. The catalysed reaction is L-methionine + ATP + H2O = S-adenosyl-L-methionine + phosphate + diphosphate. It participates in amino-acid biosynthesis; S-adenosyl-L-methionine biosynthesis; S-adenosyl-L-methionine from L-methionine: step 1/1. Catalyzes the formation of S-adenosylmethionine from methionine and ATP. The reaction comprises two steps that are both catalyzed by the same enzyme: formation of S-adenosylmethionine (AdoMet) and triphosphate, and subsequent hydrolysis of the triphosphate. This Solanum lycopersicum (Tomato) protein is S-adenosylmethionine synthase 2 (SAM2).